A 144-amino-acid chain; its full sequence is Large ribosomal subunit protein uL16m (144 aa).

The protein belongs to the universal ribosomal protein uL16 family.

The protein localises to the mitochondrion. In Dictyostelium discoideum (Social amoeba), this protein is Large ribosomal subunit protein uL16m (mrpl16).